A 465-amino-acid chain; its full sequence is MSNKMWGGRFTDRPDAIMEEINVSIDVDRHLYAQDITASKAHAAMLAAQGIITANDAKNIGKGLDTILSEITAGKFTFKRALEDIHMNVESRLAELIGPAAGRLHTARSRNDQVATDFRLYVRDVLDETDAALAALQQALAERALEQADTVMPGFTHLQTAQPVTFGHHLMAYVEMVARDRGRFQDARKRLNESPLGAAALAGTSFPIDRHATAAKLGFDRPMANSLDAVSDRDFVLETLSAASICAVHLSRFAEEIVIWTSPLVGLIRLSDKFTTGSSIMPQKRNPDAAELVRAKTGRVIGALNGLLIVMKGLPLAYQKDMQEDKQGAMEGFAALSLAIRAITGMVRDLEPEPERMKLAAGEGYATATDLADWLVRTLKMPFREAHHVTGRIVGLAAKKGVALHELPLAEMQSVEKRITKDVLAVLSVESSVKSRTSYGGTAPKNVRSQAKAWLKRLAKDTKTR.

This sequence belongs to the lyase 1 family. Argininosuccinate lyase subfamily.

The protein resides in the cytoplasm. It carries out the reaction 2-(N(omega)-L-arginino)succinate = fumarate + L-arginine. It functions in the pathway amino-acid biosynthesis; L-arginine biosynthesis; L-arginine from L-ornithine and carbamoyl phosphate: step 3/3. This chain is Argininosuccinate lyase, found in Rhodopseudomonas palustris (strain ATCC BAA-98 / CGA009).